A 1266-amino-acid chain; its full sequence is SUMO-interacting motif-containing protein 1 (1266 aa).

Residues 1-35 (MEDFIVISDDSGSESSAGTRSGRARRLRRALSRTP) are disordered. Residues 22–31 (GRARRLRRAL) are compositionally biased toward basic residues. Residues 45 to 49 (FIDLT) carry the SUMO interaction motif 1 (SIM); mediates the binding to polysumoylated substrates motif. The SUMO interaction motif 2 (SIM); mediates the binding to polysumoylated substrates motif lies at 64-68 (VIDLT). Low complexity-rich tracts occupy residues 183-197 (SPFS…SSSN) and 532-553 (SSGG…VPQS). Disordered regions lie at residues 183 to 206 (SPFS…PCPQ), 532 to 732 (SSGG…SGDV), 756 to 812 (NRHS…PGSA), and 1024 to 1052 (LTPP…PQPN). Polar residues predominate over residues 560–571 (SPGSVSQSSGDV). Residues 764 to 777 (SAPSSPSCSANPLS) show a composition bias toward low complexity. Residues 779 to 1266 (QSEFSSEKRP…NPDTEPASER (488 aa)) form an interaction with SLF2 region. The required for inhibition of CAPN3 protease activity stretch occupies residues 857 to 1266 (SKGQKLEPIP…NPDTEPASER (410 aa)). An NSE5-like domain region spans residues 865–1200 (IPHRRLRMVT…IDRKDLIIKR (336 aa)).

As to quaternary structure, forms a heterodimer with SLF2. Interacts (via SIM domains) with SUMO1 and SUMO2. Interacts with CAPN3 and CTBP1. Interacts with SMC6 and ZNF451.

It localises to the nucleus. Its subcellular location is the PML body. Inhibits the protease activity of CAPN3. May play a role in SMC5-SMC6 complex recruitment for viral restriction. Forms a complex with SLF2 and this complex is required to recruit SMC5-SMC6 complex to PML nuclear bodies and sites of viral replication. The chain is SUMO-interacting motif-containing protein 1 (Simc1) from Rattus norvegicus (Rat).